The sequence spans 85 residues: UPF0335 protein BQ12070 (85 aa).

It belongs to the UPF0335 family.

The chain is UPF0335 protein BQ12070 from Bartonella quintana (strain Toulouse) (Rochalimaea quintana).